The chain runs to 117 residues: Basic phospholipase A2 pseudexin A chain (117 aa).

Disulfide bonds link Cys11–Cys71, Cys27–Cys117, Cys29–Cys45, Cys44–Cys98, Cys51–Cys91, Cys60–Cys84, and Cys78–Cys89. Ca(2+)-binding residues include Tyr28, Gly30, and Gly32. The active site involves His48. A Ca(2+)-binding site is contributed by Asp49. Asp92 is an active-site residue.

It belongs to the phospholipase A2 family. Group I subfamily. D49 sub-subfamily. Requires Ca(2+) as cofactor. In terms of tissue distribution, expressed by the venom gland.

It localises to the secreted. It catalyses the reaction a 1,2-diacyl-sn-glycero-3-phosphocholine + H2O = a 1-acyl-sn-glycero-3-phosphocholine + a fatty acid + H(+). In terms of biological role, PLA2 catalyzes the calcium-dependent hydrolysis of the 2-acyl groups in 3-sn-phosphoglycerides. This is Basic phospholipase A2 pseudexin A chain from Pseudechis porphyriacus (Red-bellied black snake).